The following is a 567-amino-acid chain: Low-affinity glucose transporter HXT3 (567 aa).

The segment covering 1-29 (MNSTPDLISPQKSSENSNADLPSNSSQVM) has biased composition (polar residues). The segment at 1–30 (MNSTPDLISPQKSSENSNADLPSNSSQVMN) is disordered. The Cytoplasmic segment spans residues 1–57 (MNSTPDLISPQKSSENSNADLPSNSSQVMNMPEEKGVQDDFQAEADQVLTNPNTGKG). Residue Ser23 is modified to Phosphoserine. Residues 58–78 (AYVTVSICCVMVAFGGFVFGW) traverse the membrane as a helical segment. Residues 79-113 (DTGTISGFVAQTDFLRRFGMKHKDGSYYLSKVRTG) lie on the Extracellular side of the membrane. The helical transmembrane segment at 114-134 (LIVSIFNIGCAIGGIILAKLG) threads the bilayer. The Cytoplasmic portion of the chain corresponds to 135–140 (DMYGRK). The chain crosses the membrane as a helical span at residues 141 to 161 (MGLIVVVVIYIIGIIIQIASI). The Extracellular segment spans residues 162-171 (NKWYQYFIGR). Residues 172–192 (IISGLGVGGIAVLSPMLISEV) traverse the membrane as a helical segment. The Cytoplasmic portion of the chain corresponds to 193–198 (APKEMR). Residues 199 to 219 (GTLVSCYQLMITLGIFLGYCT) form a helical membrane-spanning segment. Residues 220-233 (NFGTKNYSNSVQWR) lie on the Extracellular side of the membrane. Residue Asn225 is glycosylated (N-linked (GlcNAc...) asparagine). A helical membrane pass occupies residues 234–254 (VPLGLCFAWALFMIGGMTFVP). At 255–337 (ESPRYLVEAG…IQSLQQLTGD (83 aa)) the chain is on the cytoplasmic side. Residues 338 to 354 (NYFFYYGTTVFNAVGMS) traverse the membrane as a helical segment. Topologically, residues 355–360 (DSFETS) are extracellular. The helical transmembrane segment at 361–378 (IVFGVVNFFSTCCSLYTV) threads the bilayer. The Cytoplasmic segment spans residues 379–385 (DRFGRRN). The helical transmembrane segment at 386 to 406 (CLLYGAIGMVCCYVVYASVGV) threads the bilayer. At 407 to 428 (TRLWPNGEGNGSSKGAGNCMIV) the chain is on the extracellular side. Asn416 carries N-linked (GlcNAc...) asparagine glycosylation. The helical transmembrane segment at 429–449 (FACFYIFCFATTWAPIAYVVI) threads the bilayer. Residues 450–466 (SETFPLRVKSKAMSIAT) lie on the Cytoplasmic side of the membrane. Residues 467 to 487 (AANWLWGFLIGFFTPFITGAI) form a helical membrane-spanning segment. Residue Asn488 is a topological domain, extracellular. Residues 489 to 509 (FYYGYVFMGCMVFAYFYVFFF) traverse the membrane as a helical segment. At 510–567 (VPETKGLTLEEVNDMYAEGVLPWKSASWVPTSQRGANYDADALMHDDQPFYKKMFGKK) the chain is on the cytoplasmic side.

The protein belongs to the major facilitator superfamily. Sugar transporter (TC 2.A.1.1) family.

Its subcellular location is the membrane. Functionally, low-affinity glucose transporter. The protein is Low-affinity glucose transporter HXT3 (HXT3) of Saccharomyces cerevisiae (strain ATCC 204508 / S288c) (Baker's yeast).